The chain runs to 421 residues: 2',3'-cyclic-nucleotide 3'-phosphodiesterase (421 aa).

Phosphoserine is present on residues S6 and S9. The residue at position 110 (Y110) is a Phosphotyrosine. Phosphoserine is present on S170. H251 acts as the Proton acceptor in catalysis. T253 is a substrate binding site. H330 functions as the Proton donor in the catalytic mechanism. T332 lines the substrate pocket. Residue S359 is modified to Phosphoserine. C418 carries the post-translational modification Cysteine methyl ester. A lipid anchor (S-farnesyl cysteine) is attached at C418. Positions T419–I421 are cleaved as a propeptide — removed in mature form.

Belongs to the 2H phosphoesterase superfamily. CNPase family. Exists as monomers and homodimers.

The protein localises to the membrane. It is found in the melanosome. It catalyses the reaction a nucleoside 2',3'-cyclic phosphate + H2O = a nucleoside 2'-phosphate + H(+). Catalyzes the formation of 2'-nucleotide products from 2',3'-cyclic substrates. May participate in RNA metabolism in the myelinating cell, CNP is the third most abundant protein in central nervous system myelin. In Pongo abelii (Sumatran orangutan), this protein is 2',3'-cyclic-nucleotide 3'-phosphodiesterase.